Consider the following 111-residue polypeptide: UPF0060 membrane protein Aave_2845 (111 aa).

The next 4 helical transmembrane spans lie at 7–27 (FLLYAVTALAEIAGCYLPWLW), 33–53 (SAWLLVPGAACLALFAWLLTL), 63–83 (AAYGGVYVAVALGWLWAVDGI), and 90–110 (LAGAAVTLAGMAIIAFAPRGA).

This sequence belongs to the UPF0060 family.

It localises to the cell inner membrane. This chain is UPF0060 membrane protein Aave_2845, found in Paracidovorax citrulli (strain AAC00-1) (Acidovorax citrulli).